A 310-amino-acid polypeptide reads, in one-letter code: N-acetylmuramic acid 6-phosphate etherase (310 aa).

One can recognise an SIS domain in the interval 64–227 (ITSRLKSNGR…STSVMIKLGK (164 aa)). Glu92 (proton donor) is an active-site residue. Glu123 is a catalytic residue.

This sequence belongs to the GCKR-like family. MurNAc-6-P etherase subfamily. As to quaternary structure, homodimer.

The catalysed reaction is N-acetyl-D-muramate 6-phosphate + H2O = N-acetyl-D-glucosamine 6-phosphate + (R)-lactate. It functions in the pathway amino-sugar metabolism; N-acetylmuramate degradation. Functionally, specifically catalyzes the cleavage of the D-lactyl ether substituent of MurNAc 6-phosphate, producing GlcNAc 6-phosphate and D-lactate. The polypeptide is N-acetylmuramic acid 6-phosphate etherase (Prochlorococcus marinus (strain NATL2A)).